The chain runs to 493 residues: Lysine--tRNA ligase (493 aa).

Positions 402 and 409 each coordinate Mg(2+).

Belongs to the class-II aminoacyl-tRNA synthetase family. In terms of assembly, homodimer. Mg(2+) serves as cofactor.

It is found in the cytoplasm. It carries out the reaction tRNA(Lys) + L-lysine + ATP = L-lysyl-tRNA(Lys) + AMP + diphosphate. This is Lysine--tRNA ligase from Fusobacterium nucleatum subsp. nucleatum (strain ATCC 25586 / DSM 15643 / BCRC 10681 / CIP 101130 / JCM 8532 / KCTC 2640 / LMG 13131 / VPI 4355).